We begin with the raw amino-acid sequence, 137 residues long: uncharacterized protein (137 aa).

4 helical membrane passes run 20 to 39, 44 to 61, 86 to 105, and 109 to 131; these read YGKI…GYAV, WFIT…LSLV, VEIF…ALDL, and AALA…YGYY.

The protein localises to the cell membrane. This is an uncharacterized protein from Archaeoglobus fulgidus (strain ATCC 49558 / DSM 4304 / JCM 9628 / NBRC 100126 / VC-16).